Reading from the N-terminus, the 348-residue chain is 3-keto-steroid reductase (348 aa).

The NADP(+) site is built by Leu18, Val37, Thr41, Arg47, and Arg163. Residues Ser180 and Tyr203 each act as proton donor in the active site. Residues Tyr203, Lys207, and Ser238 each coordinate NADP(+). Catalysis depends on Lys207, which acts as the Lowers pKa of active site Tyr.

This sequence belongs to the short-chain dehydrogenases/reductases (SDR) family. ERG27 subfamily.

It catalyses the reaction a 3beta-hydroxysteroid + NADP(+) = a 3-oxosteroid + NADPH + H(+). It functions in the pathway steroid biosynthesis; zymosterol biosynthesis; zymosterol from lanosterol: step 5/6. Responsible for the reduction of the keto group on the C-3 of sterols. In Eremothecium gossypii (strain ATCC 10895 / CBS 109.51 / FGSC 9923 / NRRL Y-1056) (Yeast), this protein is 3-keto-steroid reductase (ERG27).